The following is a 54-amino-acid chain: Sec-independent protein translocase protein TatA (54 aa).

The chain crosses the membrane as a helical span at residues 1-21 (MGMSFSHLLIVLLIIFVLFGA).

This sequence belongs to the TatA/E family. As to quaternary structure, the Tat system comprises two distinct complexes: a TatABC complex, containing multiple copies of TatA, TatB and TatC subunits, and a separate TatA complex, containing only TatA subunits. Substrates initially bind to the TatABC complex, which probably triggers association of the separate TatA complex to form the active translocon.

Its subcellular location is the cell inner membrane. Functionally, part of the twin-arginine translocation (Tat) system that transports large folded proteins containing a characteristic twin-arginine motif in their signal peptide across membranes. TatA could form the protein-conducting channel of the Tat system. In Rickettsia canadensis (strain McKiel), this protein is Sec-independent protein translocase protein TatA.